The sequence spans 1099 residues: Probable inorganic carbon transporter subunit DabA (1099 aa).

Positions 175–194 are disordered; that stretch reads RQGRRRFATTERRTRRTRRS. Over residues 176 to 194 the composition is skewed to basic residues; it reads QGRRRFATTERRTRRTRRS. Residues Cys514, Asp516, His722, and Cys737 each contribute to the Zn(2+) site. A disordered region spans residues 1071-1099; that stretch reads AGAGAAQPTRDAIELPEQASGPLPARDGQ.

This sequence belongs to the inorganic carbon transporter (TC 9.A.2) DabA family. Forms a complex with DabB. It depends on Zn(2+) as a cofactor.

Its subcellular location is the cell membrane. Functionally, part of an energy-coupled inorganic carbon pump. This is Probable inorganic carbon transporter subunit DabA from Parafrankia sp. (strain EAN1pec).